The primary structure comprises 63 residues: Large ribosomal subunit protein bL28 (63 aa).

Residues 1 to 22 (MSRRCAITGKSAMNGHSVSHAN) form a disordered region.

This sequence belongs to the bacterial ribosomal protein bL28 family.

In Campylobacter hominis (strain ATCC BAA-381 / DSM 21671 / CCUG 45161 / LMG 19568 / NCTC 13146 / CH001A), this protein is Large ribosomal subunit protein bL28.